An 859-amino-acid chain; its full sequence is Glucans biosynthesis glucosyltransferase H (859 aa).

A run of 6 helical transmembrane segments spans residues 144–166, 200–222, 523–545, 573–595, 608–630, and 684–706; these read YILL…GILP, LLLF…MGFL, VMSY…LLAV, VALF…ILIW, VTVS…MLFH, and SFLW…SVIS.

The protein belongs to the glycosyltransferase 2 family. OpgH subfamily.

The protein resides in the cell inner membrane. Its pathway is glycan metabolism; osmoregulated periplasmic glucan (OPG) biosynthesis. Functionally, involved in the biosynthesis of osmoregulated periplasmic glucans (OPGs). The polypeptide is Glucans biosynthesis glucosyltransferase H (Pseudomonas syringae pv. tomato (strain ATCC BAA-871 / DC3000)).